A 101-amino-acid chain; its full sequence is MDPQSAIYTLPRVPTAAPTTGGVSWSHVGEVAILSFVALICIYLLYLWVLRDLILVLKARRGRSTEELIFGSEAVDRRHPIPNTLEPTAPVHPGPFVPGQG.

The chain crosses the membrane as a helical span at residues 30–50 (EVAILSFVALICIYLLYLWVL). The tract at residues 80-101 (PIPNTLEPTAPVHPGPFVPGQG) is disordered. Positions 90 to 101 (PVHPGPFVPGQG) are enriched in pro residues.

It belongs to the mastrevirus movement protein family. Interacts with the capsid protein (CP). Part of a MP-CP-viral DNA complex.

The protein resides in the host membrane. In terms of biological role, involved in the viral transport within, and between cells. The chain is Movement protein from Avena sativa (Oat).